A 393-amino-acid chain; its full sequence is Dual-specificity RNA methyltransferase RlmN (393 aa).

Residues 1 to 22 (MSEQLLSELSPVAATSPSPAPA) are disordered. Residues 10-22 (SPVAATSPSPAPA) are compositionally biased toward low complexity. Catalysis depends on Glu114, which acts as the Proton acceptor. The 239-residue stretch at 120–358 (EDDRATLCVS…TTIVRKTRGD (239 aa)) folds into the Radical SAM core domain. Cys127 and Cys364 form a disulfide bridge. The [4Fe-4S] cluster site is built by Cys134, Cys138, and Cys141. S-adenosyl-L-methionine-binding positions include 188–189 (GE), Ser220, 242–244 (SLH), and Asn321. Cys364 functions as the S-methylcysteine intermediate in the catalytic mechanism.

Belongs to the radical SAM superfamily. RlmN family. [4Fe-4S] cluster is required as a cofactor.

It is found in the cytoplasm. It catalyses the reaction adenosine(2503) in 23S rRNA + 2 reduced [2Fe-2S]-[ferredoxin] + 2 S-adenosyl-L-methionine = 2-methyladenosine(2503) in 23S rRNA + 5'-deoxyadenosine + L-methionine + 2 oxidized [2Fe-2S]-[ferredoxin] + S-adenosyl-L-homocysteine. It carries out the reaction adenosine(37) in tRNA + 2 reduced [2Fe-2S]-[ferredoxin] + 2 S-adenosyl-L-methionine = 2-methyladenosine(37) in tRNA + 5'-deoxyadenosine + L-methionine + 2 oxidized [2Fe-2S]-[ferredoxin] + S-adenosyl-L-homocysteine. Functionally, specifically methylates position 2 of adenine 2503 in 23S rRNA and position 2 of adenine 37 in tRNAs. m2A2503 modification seems to play a crucial role in the proofreading step occurring at the peptidyl transferase center and thus would serve to optimize ribosomal fidelity. In Sodalis glossinidius (strain morsitans), this protein is Dual-specificity RNA methyltransferase RlmN.